The sequence spans 186 residues: Astacin-like metalloprotease toxin 5 (186 aa).

Positions 1–186 (NAVKYDQQLW…CHSKRKAELL (186 aa)) constitute a Peptidase M12A domain. 2 cysteine pairs are disulfide-bonded: Cys-42/Cys-177 and Cys-63/Cys-84. His-92 contacts Zn(2+). Residue Glu-93 is part of the active site. 2 residues coordinate Zn(2+): His-96 and His-102. Asn-122 carries an N-linked (GlcNAc...) asparagine glycan.

In terms of assembly, monomer. Zn(2+) serves as cofactor. In terms of tissue distribution, expressed by the venom gland.

Its subcellular location is the secreted. Inhibited by 1,10-phenanthroline. Its function is as follows. Zinc metalloprotease. Provoques deadhesion of endothelial cells from cell cultures, and also degradation of fibronectin, fibrinogen and gelatin in vitro. Its role in the venom is not fully understood but it might act as a spreading factor that facilitates diffusion of other venom toxins. Alternatively, it might be involved in the proteolytic processing of other venom toxins or it might play a role in extra-oral digestion of prey. The protein is Astacin-like metalloprotease toxin 5 of Loxosceles gaucho (Spider).